A 156-amino-acid polypeptide reads, in one-letter code: Ribosomal RNA large subunit methyltransferase H (156 aa).

S-adenosyl-L-methionine-binding positions include G104 and 123-128; that span reads LSPMVM.

This sequence belongs to the RNA methyltransferase RlmH family. As to quaternary structure, homodimer.

It localises to the cytoplasm. It catalyses the reaction pseudouridine(1915) in 23S rRNA + S-adenosyl-L-methionine = N(3)-methylpseudouridine(1915) in 23S rRNA + S-adenosyl-L-homocysteine + H(+). Functionally, specifically methylates the pseudouridine at position 1915 (m3Psi1915) in 23S rRNA. This Bdellovibrio bacteriovorus (strain ATCC 15356 / DSM 50701 / NCIMB 9529 / HD100) protein is Ribosomal RNA large subunit methyltransferase H.